The sequence spans 156 residues: Small ribosomal subunit protein uS7 (156 aa).

It belongs to the universal ribosomal protein uS7 family. As to quaternary structure, part of the 30S ribosomal subunit. Contacts proteins S9 and S11.

One of the primary rRNA binding proteins, it binds directly to 16S rRNA where it nucleates assembly of the head domain of the 30S subunit. Is located at the subunit interface close to the decoding center, probably blocks exit of the E-site tRNA. This is Small ribosomal subunit protein uS7 from Myxococcus xanthus (strain DK1622).